The primary structure comprises 596 residues: Proline--tRNA ligase (596 aa).

Belongs to the class-II aminoacyl-tRNA synthetase family. ProS type 1 subfamily. In terms of assembly, homodimer.

The protein resides in the cytoplasm. The enzyme catalyses tRNA(Pro) + L-proline + ATP = L-prolyl-tRNA(Pro) + AMP + diphosphate. Functionally, catalyzes the attachment of proline to tRNA(Pro) in a two-step reaction: proline is first activated by ATP to form Pro-AMP and then transferred to the acceptor end of tRNA(Pro). As ProRS can inadvertently accommodate and process non-cognate amino acids such as alanine and cysteine, to avoid such errors it has two additional distinct editing activities against alanine. One activity is designated as 'pretransfer' editing and involves the tRNA(Pro)-independent hydrolysis of activated Ala-AMP. The other activity is designated 'posttransfer' editing and involves deacylation of mischarged Ala-tRNA(Pro). The misacylated Cys-tRNA(Pro) is not edited by ProRS. The chain is Proline--tRNA ligase from Prochlorococcus marinus (strain NATL1A).